The sequence spans 983 residues: Protein translocase subunit SecA (983 aa).

ATP-binding positions include Q83, 101–105 (GEGKT), and D489. The tract at residues 948-983 (ISSEEEDNNEKTNINNNEDLERTKGEAQQTAKNPNE) is disordered. Positions 973–983 (EAQQTAKNPNE) are enriched in polar residues.

This sequence belongs to the SecA family. As to quaternary structure, monomer and homodimer. Part of the essential Sec protein translocation apparatus which comprises SecA, SecYEG and auxiliary proteins SecDF. Other proteins may also be involved.

It localises to the cell membrane. Its subcellular location is the cytoplasm. The enzyme catalyses ATP + H2O + cellular proteinSide 1 = ADP + phosphate + cellular proteinSide 2.. In terms of biological role, part of the Sec protein translocase complex. Interacts with the SecYEG preprotein conducting channel. Has a central role in coupling the hydrolysis of ATP to the transfer of proteins into and across the cell membrane, serving as an ATP-driven molecular motor driving the stepwise translocation of polypeptide chains across the membrane. The polypeptide is Protein translocase subunit SecA (Mesomycoplasma hyopneumoniae (strain 232) (Mycoplasma hyopneumoniae)).